The following is a 302-amino-acid chain: Sulfate adenylyltransferase subunit 2 (302 aa).

The protein belongs to the PAPS reductase family. CysD subfamily. Heterodimer composed of CysD, the smaller subunit, and CysN.

The enzyme catalyses sulfate + ATP + H(+) = adenosine 5'-phosphosulfate + diphosphate. It functions in the pathway sulfur metabolism; hydrogen sulfide biosynthesis; sulfite from sulfate: step 1/3. Its function is as follows. With CysN forms the ATP sulfurylase (ATPS) that catalyzes the adenylation of sulfate producing adenosine 5'-phosphosulfate (APS) and diphosphate, the first enzymatic step in sulfur assimilation pathway. APS synthesis involves the formation of a high-energy phosphoric-sulfuric acid anhydride bond driven by GTP hydrolysis by CysN coupled to ATP hydrolysis by CysD. The sequence is that of Sulfate adenylyltransferase subunit 2 from Xanthomonas oryzae pv. oryzae (strain MAFF 311018).